We begin with the raw amino-acid sequence, 205 residues long: Phosphoribosyl-dephospho-CoA transferase (205 aa).

Active-site residues include Asp134 and Asp136.

It belongs to the MdcG family.

It carries out the reaction apo-[malonate decarboxylase ACP] + 2'-(5''-triphospho-alpha-D-ribosyl)-3'-dephospho-CoA = holo-[malonate decarboxylase ACP] + diphosphate. Its function is as follows. Transfers 2'-(5-triphosphoribosyl)-3'-dephosphocoenzyme-A to the apo-[acyl-carrier-protein] of the malonate decarboxylase to yield holo-[acyl-carrier-protein]. The protein is Phosphoribosyl-dephospho-CoA transferase of Klebsiella pneumoniae subsp. pneumoniae (strain ATCC 700721 / MGH 78578).